The sequence spans 490 residues: NADP-reducing hydrogenase subunit HndC (490 aa).

2 4Fe-4S ferredoxin-type domains span residues 433-462 and 463-490; these read LTYT…GTKK and QPHT…IIKQ.

It belongs to the complex I 51 kDa subunit family. As to quaternary structure, heterotetramer composed of HndA, HndB, HndC and HndD subunits. HndC is probably the reducing subunit.

It carries out the reaction H2 + NADP(+) = NADPH + H(+). Its activity is regulated as follows. Inhibited by oxygen. Functionally, catalyzes the reduction of NADP in the presence of molecular H2 to yield NADPH. The polypeptide is NADP-reducing hydrogenase subunit HndC (hndC) (Solidesulfovibrio fructosivorans (Desulfovibrio fructosivorans)).